Here is a 103-residue protein sequence, read N- to C-terminus: Large ribosomal subunit protein bL21 (103 aa).

This sequence belongs to the bacterial ribosomal protein bL21 family. Part of the 50S ribosomal subunit. Contacts protein L20.

This protein binds to 23S rRNA in the presence of protein L20. This is Large ribosomal subunit protein bL21 from Yersinia pseudotuberculosis serotype O:1b (strain IP 31758).